Reading from the N-terminus, the 322-residue chain is Malate dehydrogenase (322 aa).

NAD(+) is bound by residues G10–G15 and D34. Substrate contacts are provided by R83 and R89. Residues N96 and I119–N121 contribute to the NAD(+) site. Residues N121 and R152 each coordinate substrate. The active-site Proton acceptor is H176.

Belongs to the LDH/MDH superfamily. MDH type 3 family.

It carries out the reaction (S)-malate + NAD(+) = oxaloacetate + NADH + H(+). Functionally, catalyzes the reversible oxidation of malate to oxaloacetate. This Nitrobacter winogradskyi (strain ATCC 25391 / DSM 10237 / CIP 104748 / NCIMB 11846 / Nb-255) protein is Malate dehydrogenase.